A 163-amino-acid polypeptide reads, in one-letter code: Dual specificity phosphatase 28 (163 aa).

The 142-residue stretch at 10–151 (PFARVAPALF…LQKYEQTLQA (142 aa)) folds into the Tyrosine-protein phosphatase domain. Cys-95 acts as the Phosphocysteine intermediate in catalysis.

This sequence belongs to the protein-tyrosine phosphatase family. Non-receptor class dual specificity subfamily. As to quaternary structure, monomer.

The catalysed reaction is O-phospho-L-tyrosyl-[protein] + H2O = L-tyrosyl-[protein] + phosphate. It catalyses the reaction O-phospho-L-seryl-[protein] + H2O = L-seryl-[protein] + phosphate. It carries out the reaction O-phospho-L-threonyl-[protein] + H2O = L-threonyl-[protein] + phosphate. In terms of biological role, has phosphatase activity with the synthetic substrate 6,8-difluoro-4-methylumbelliferyl phosphate (in vitro). Has almost no detectable activity with phosphotyrosine, even less activity with phosphothreonine and displays complete lack of activity with phosphoserine. The poor activity with phosphotyrosine may be due to steric hindrance by bulky amino acid sidechains that obstruct access to the active site. The polypeptide is Dual specificity phosphatase 28 (Dusp28) (Mus musculus (Mouse)).